Consider the following 273-residue polypeptide: MIRIASLLLGAALLCAQGAFARRVVSGQKVCFADVKHPCYKMAYFHELSSRVSFQEARLACESEGGVLLSLENEAEQKLIESMLQNLTKPGTGISDGDFWIGLLRSGDGQTSGACPDLYQWSDGSSSQFRNWYTDEPSCGSEKCVVMYHQPTANPGLGGPYLYQWNDDRCNMKHNYICKYEPEIHPTEPAEKPYLTNQPEETHENVVVTEAGIIPNLIYVIIPTIPLLLLILVALGTCCFQMLHKSKGRSKTSPNQSTLWISKSTRKESGMEV.

The first 21 residues, 1–21 (MIRIASLLLGAALLCAQGAFA), serve as a signal peptide directing secretion. At 22-216 (RRVVSGQKVC…VVTEAGIIPN (195 aa)) the chain is on the extracellular side. Residues 35 to 179 (VKHPCYKMAY…CNMKHNYICK (145 aa)) form the C-type lectin domain. 2 disulfide bridges follow: C61–C178 and C144–C170. A glycan (N-linked (GlcNAc...) asparagine) is linked at N86. Residues 217–237 (LIYVIIPTIPLLLLILVALGT) traverse the membrane as a helical segment. Over 238–273 (CCFQMLHKSKGRSKTSPNQSTLWISKSTRKESGMEV) the chain is Cytoplasmic. The tract at residues 247–273 (KGRSKTSPNQSTLWISKSTRKESGMEV) is disordered. Residues 251–263 (KTSPNQSTLWISK) show a composition bias toward polar residues.

As to quaternary structure, interacts with RABGGTB. In terms of tissue distribution, in adult mice preferentially expressed in skeletal muscle, testis, brain, and lung. Expressed in striated muscle (at protein level). Expressed in spinal cord. Detected in spinal cord fast motor neurons (at protein level).

The protein resides in the membrane. Its function is as follows. May play a role in the development of the nervous system such as in neurite outgrowth and elongation. May be involved in motor axon growth and guidance. The polypeptide is Chondrolectin (Chodl) (Mus musculus (Mouse)).